A 516-amino-acid chain; its full sequence is Radial spoke head protein 3 homolog A (516 aa).

Disordered regions lie at residues 1-45 (MAAT…GNPA), 120-139 (STLN…AEAS), and 190-233 (PTGQ…PVEG). A compositionally biased stretch (basic residues) spans 12-25 (AKKRPLHQRARRPA). Residues 120–129 (STLNQASAMT) show a composition bias toward polar residues. Residues 208-217 (QARRRALARK) show a composition bias toward basic residues. The segment covering 218–233 (RAQEQLKPRTPEPVEG) has biased composition (basic and acidic residues). Thr-270 bears the Phosphothreonine; by MAPK1 mark. A coiled-coil region spans residues 333 to 369 (YEEIRNVELAEVQRLEEQERRHREEKERRKKQQWEIV). Positions 459 to 516 (EAMPPGQKTNVINGPNTVTDPSVTTLHTQKPVLDRVSSQPAPSQERKPVEEGGHLMAE) are disordered. A compositionally biased stretch (polar residues) spans 465–486 (QKTNVINGPNTVTDPSVTTLHT). Basic and acidic residues predominate over residues 502 to 516 (QERKPVEEGGHLMAE).

The protein belongs to the flagellar radial spoke RSP3 family. May be a component of axonemal radial spokes. Interacts with IQUB. Interacts with phosphorylated MAPK1. Interacts with MEK1. Interacts with PKA regulatory subunits PRKAR1A and PRKAR1B. Interacts with RSPH1. Interacts with RSPH4A. Interacts with RSPH6A. Interacts with RSPH9. Interacts with CFAP61. Interacts with LRRC23.

The protein localises to the cytoplasm. The protein resides in the cytoskeleton. It is found in the cilium axoneme. It localises to the flagellum axoneme. Its function is as follows. May function as part of axonemal radial spoke complexes that play an important part in the motility of sperm and cilia. Functions as a protein kinase A-anchoring protein that scaffolds the cAMP-dependent protein kinase holoenzyme. May serve as a point of convergence for MAPK and PKA signaling in cilia. The polypeptide is Radial spoke head protein 3 homolog A (Rsph3a) (Mus musculus (Mouse)).